Reading from the N-terminus, the 95-residue chain is Small ribosomal subunit protein bS6 (95 aa).

The protein belongs to the bacterial ribosomal protein bS6 family.

In terms of biological role, binds together with bS18 to 16S ribosomal RNA. In Clostridium acetobutylicum (strain ATCC 824 / DSM 792 / JCM 1419 / IAM 19013 / LMG 5710 / NBRC 13948 / NRRL B-527 / VKM B-1787 / 2291 / W), this protein is Small ribosomal subunit protein bS6.